The sequence spans 392 residues: Chaperone protein DnaJ (392 aa).

The J domain occupies Asp-2 to Gly-67. The segment at Gly-149–Lys-227 adopts a CR-type zinc-finger fold. The Zn(2+) site is built by Cys-162, Cys-165, Cys-179, Cys-182, Cys-201, Cys-204, Cys-215, and Cys-218. CXXCXGXG motif repeat units follow at residues Cys-162 to Gly-169, Cys-179 to Gly-186, Cys-201 to Gly-208, and Cys-215 to Gly-222.

This sequence belongs to the DnaJ family. In terms of assembly, homodimer. The cofactor is Zn(2+).

The protein localises to the cytoplasm. Functionally, participates actively in the response to hyperosmotic and heat shock by preventing the aggregation of stress-denatured proteins and by disaggregating proteins, also in an autonomous, DnaK-independent fashion. Unfolded proteins bind initially to DnaJ; upon interaction with the DnaJ-bound protein, DnaK hydrolyzes its bound ATP, resulting in the formation of a stable complex. GrpE releases ADP from DnaK; ATP binding to DnaK triggers the release of the substrate protein, thus completing the reaction cycle. Several rounds of ATP-dependent interactions between DnaJ, DnaK and GrpE are required for fully efficient folding. Also involved, together with DnaK and GrpE, in the DNA replication of plasmids through activation of initiation proteins. This is Chaperone protein DnaJ from Chlamydia trachomatis serovar L2 (strain ATCC VR-902B / DSM 19102 / 434/Bu).